We begin with the raw amino-acid sequence, 353 residues long: Green-sensitive opsin-2 (353 aa).

The Extracellular portion of the chain corresponds to Met1 to Val47. N-linked (GlcNAc...) asparagine glycosylation is present at Asn29. Residues Tyr48–Ala72 form a helical membrane-spanning segment. The Cytoplasmic segment spans residues Thr73–Asn84. Residues Trp85–Ile110 form a helical membrane-spanning segment. The Extracellular portion of the chain corresponds to Phe111–Glu124. A disulfide bridge links Cys121 with Cys198. A helical membrane pass occupies residues Gly125–Trp144. Residues Glu145 to Trp163 lie on the Cytoplasmic side of the membrane. A helical membrane pass occupies residues Ala164–Ser187. Topologically, residues Arg188 to Ser213 are extracellular. A helical transmembrane segment spans residues Tyr214–Ile241. The Cytoplasmic portion of the chain corresponds to His242–Arg263. A helical transmembrane segment spans residues Met264–Ala287. Residues Val288–His295 are Extracellular-facing. The helical transmembrane segment at Pro296 to Met320 threads the bilayer. At Lys307 the chain carries N6-(retinylidene)lysine. The Cytoplasmic segment spans residues Asn321 to Ser353.

The protein belongs to the G-protein coupled receptor 1 family. Opsin subfamily. In terms of tissue distribution, the color pigments are found in the cone photoreceptor cells.

It is found in the membrane. Visual pigments are the light-absorbing molecules that mediate vision. They consist of an apoprotein, opsin, covalently linked to cis-retinal. This Psalidodon fasciatus (Banded astyanax) protein is Green-sensitive opsin-2 (G101).